Reading from the N-terminus, the 379-residue chain is Homoserine O-succinyltransferase (379 aa).

Positions 51 to 360 (NAVLICHALS…DSPYGHDAFL (310 aa)) constitute an AB hydrolase-1 domain. Ser157 acts as the Nucleophile in catalysis. Residue Arg227 coordinates substrate. Catalysis depends on residues Asp323 and His356. A substrate-binding site is contributed by Asp357.

The protein belongs to the AB hydrolase superfamily. MetX family. Homodimer.

The protein localises to the cytoplasm. The enzyme catalyses L-homoserine + succinyl-CoA = O-succinyl-L-homoserine + CoA. It functions in the pathway amino-acid biosynthesis; L-methionine biosynthesis via de novo pathway; O-succinyl-L-homoserine from L-homoserine: step 1/1. Its function is as follows. Transfers a succinyl group from succinyl-CoA to L-homoserine, forming succinyl-L-homoserine. The protein is Homoserine O-succinyltransferase of Pseudomonas putida (strain ATCC 700007 / DSM 6899 / JCM 31910 / BCRC 17059 / LMG 24140 / F1).